A 430-amino-acid polypeptide reads, in one-letter code: uncharacterized protein (430 aa).

A run of 10 helical transmembrane segments spans residues 13-33 (FFAA…FAFF), 47-67 (LAEL…GVVA), 88-108 (VVLF…ILFI), 138-158 (GLNQ…GAFM), 228-248 (LIFG…LPMF), 264-284 (SVFT…GTLI), 296-316 (IPIF…ILWV), 319-339 (AAAF…GGWM), 358-378 (FMMF…PKFV), and 383-403 (YLYY…FIAL).

The protein belongs to the major facilitator superfamily.

The protein localises to the cell membrane. This is an uncharacterized protein from Bacillus subtilis (strain 168).